The following is a 366-amino-acid chain: MAP kinase-activated protein kinase 2 (366 aa).

One can recognise a Protein kinase domain in the interval 30–291; that stretch reads KVTSQVLGLG…ITEFMNHPWI (262 aa). Residues 36 to 44 and Lys59 each bind ATP; that span reads LGLGINGKV. Position 105–107 (105–107) interacts with staurosporine; the sequence is ECL. The active-site Proton acceptor is the Asp152. A Phosphothreonine; by MAPK14 modification is found at Thr188. A Phosphoserine; by MAPK14 modification is found at Ser238. Residue Ser294 is modified to Phosphoserine; by autocatalysis. Residues 294-330 are autoinhibitory helix; it reads STKVPQTPLHTSRVLKEDKERWEDVKEEMTSALATMR. Thr300 bears the Phosphothreonine; by MAPK14 mark. Lys319 participates in a covalent cross-link: Glycyl lysine isopeptide (Lys-Gly) (interchain with G-Cter in SUMO). Residues 322 to 331 carry the Nuclear export signal (NES) motif; the sequence is MTSALATMRV. Residues 332–356 are p38 MAPK-binding site; that stretch reads DYEQIKIKKIEDASNPLLLKRRKKA. 2 short sequence motifs (bipartite nuclear localization signal) span residues 337 to 340 and 351 to 355; these read KIKK and KRRKK.

Belongs to the protein kinase superfamily. CAMK Ser/Thr protein kinase family. Heterodimer with p38-alpha/MAPK14; this heterodimer forms a stable complex: molecules are positioned 'face to face' so that the ATP-binding sites of both kinases are at the heterodimer interface. Interacts with PHC2. Interacts with HSF1. Sumoylation inhibits the protein kinase activity. In terms of processing, phosphorylated and activated by MAP kinase p38-alpha/MAPK14 at Thr-188, Ser-238 and Thr-300.

It localises to the cytoplasm. It is found in the nucleus. The enzyme catalyses L-seryl-[protein] + ATP = O-phospho-L-seryl-[protein] + ADP + H(+). It catalyses the reaction L-threonyl-[protein] + ATP = O-phospho-L-threonyl-[protein] + ADP + H(+). Its activity is regulated as follows. Activated following phosphorylation by p38-alpha/MAPK14 following various stresses. Inhibited following sumoylation. Specifically inhibited by pyrrolopyridine inhibitors. In terms of biological role, stress-activated serine/threonine-protein kinase involved in cytokine production, endocytosis, reorganization of the cytoskeleton, cell migration, cell cycle control, chromatin remodeling, DNA damage response and transcriptional regulation. Following stress, it is phosphorylated and activated by MAP kinase p38-alpha/MAPK14, leading to phosphorylation of substrates. Phosphorylates serine in the peptide sequence, Hyd-X-R-X(2)-S, where Hyd is a large hydrophobic residue. Phosphorylates ALOX5, CDC25B, CDC25C, CEP131, ELAVL1, HNRNPA0, HSP27/HSPB1, KRT18, KRT20, LIMK1, LSP1, PABPC1, PARN, PDE4A, RCSD1, RPS6KA3, TAB3 and TTP/ZFP36. Phosphorylates HSF1; leading to the interaction with HSP90 proteins and inhibiting HSF1 homotrimerization, DNA-binding and transactivation activities. Mediates phosphorylation of HSP27/HSPB1 in response to stress, leading to dissociation of HSP27/HSPB1 from large small heat-shock protein (sHsps) oligomers and impairment of their chaperone activities and ability to protect against oxidative stress effectively. Involved in inflammatory response by regulating tumor necrosis factor (TNF) and IL6 production post-transcriptionally: acts by phosphorylating AU-rich elements (AREs)-binding proteins ELAVL1, HNRNPA0, PABPC1 and TTP/ZFP36, leading to regulate the stability and translation of TNF and IL6 mRNAs. Phosphorylation of TTP/ZFP36, a major post-transcriptional regulator of TNF, promotes its binding to 14-3-3 proteins and reduces its ARE mRNA affinity leading to inhibition of dependent degradation of ARE-containing transcripts. Phosphorylates CEP131 in response to cellular stress following ultraviolet irradiation which promotes binding of CEP131 to 14-3-3 proteins and inhibits formation of novel centriolar satellites. Also involved in late G2/M checkpoint following DNA damage through a process of post-transcriptional mRNA stabilization: following DNA damage, relocalizes from nucleus to cytoplasm and phosphorylates HNRNPA0 and PARN, leading to stabilization of GADD45A mRNA. Involved in toll-like receptor signaling pathway (TLR) in dendritic cells: required for acute TLR-induced macropinocytosis by phosphorylating and activating RPS6KA3. This chain is MAP kinase-activated protein kinase 2 (MAPKAPK2), found in Oryctolagus cuniculus (Rabbit).